Reading from the N-terminus, the 414-residue chain is Cytochrome c biogenesis protein Ccs1 (414 aa).

3 consecutive transmembrane segments (helical) span residues Leu-14 to Ile-34, Ser-73 to Thr-93, and Val-159 to Thr-179.

The protein belongs to the Ccs1/CcsB family. In terms of assembly, may interact with CcsA.

Its subcellular location is the plastid. The protein localises to the chloroplast thylakoid membrane. In terms of biological role, required during biogenesis of c-type cytochromes (cytochrome c6 and cytochrome f) at the step of heme attachment. This is Cytochrome c biogenesis protein Ccs1 from Guillardia theta (Cryptophyte).